The primary structure comprises 1023 residues: Lon protease homolog (1023 aa).

Residue 515–522 (GPPGVGKT) participates in ATP binding. One can recognise a Lon proteolytic domain in the interval 810–1003 (TNMIGVINGL…IEIITDPNVI (194 aa)). S906 is an active-site residue.

This sequence belongs to the peptidase S16 family.

This Acanthamoeba polyphaga (Amoeba) protein is Lon protease homolog.